Reading from the N-terminus, the 161-residue chain is Cyclic pyranopterin monophosphate synthase (161 aa).

Residues Leu75–His77 and Met113–Glu114 each bind substrate. Residue Asp128 is part of the active site.

It belongs to the MoaC family. As to quaternary structure, homohexamer; trimer of dimers.

It carries out the reaction (8S)-3',8-cyclo-7,8-dihydroguanosine 5'-triphosphate = cyclic pyranopterin phosphate + diphosphate. It functions in the pathway cofactor biosynthesis; molybdopterin biosynthesis. Its function is as follows. Catalyzes the conversion of (8S)-3',8-cyclo-7,8-dihydroguanosine 5'-triphosphate to cyclic pyranopterin monophosphate (cPMP). The chain is Cyclic pyranopterin monophosphate synthase from Thioalkalivibrio sulfidiphilus (strain HL-EbGR7).